Here is a 226-residue protein sequence, read N- to C-terminus: Deoxyribose-phosphate aldolase (226 aa).

The active-site Proton donor/acceptor is the Asp-94. The active-site Schiff-base intermediate with acetaldehyde is the Lys-156. Lys-185 (proton donor/acceptor) is an active-site residue.

The protein belongs to the DeoC/FbaB aldolase family. DeoC type 1 subfamily.

Its subcellular location is the cytoplasm. The enzyme catalyses 2-deoxy-D-ribose 5-phosphate = D-glyceraldehyde 3-phosphate + acetaldehyde. The protein operates within carbohydrate degradation; 2-deoxy-D-ribose 1-phosphate degradation; D-glyceraldehyde 3-phosphate and acetaldehyde from 2-deoxy-alpha-D-ribose 1-phosphate: step 2/2. Functionally, catalyzes a reversible aldol reaction between acetaldehyde and D-glyceraldehyde 3-phosphate to generate 2-deoxy-D-ribose 5-phosphate. In Burkholderia lata (strain ATCC 17760 / DSM 23089 / LMG 22485 / NCIMB 9086 / R18194 / 383), this protein is Deoxyribose-phosphate aldolase.